Here is a 328-residue protein sequence, read N- to C-terminus: GMP reductase (328 aa).

Cysteine 176 (thioimidate intermediate) is an active-site residue. Residue 205 to 228 coordinates NADP(+); sequence IIADGGIRTHGDIAKSIRFGASMI.

The protein belongs to the IMPDH/GMPR family. GuaC type 2 subfamily.

The enzyme catalyses IMP + NH4(+) + NADP(+) = GMP + NADPH + 2 H(+). Functionally, catalyzes the irreversible NADPH-dependent deamination of GMP to IMP. It functions in the conversion of nucleobase, nucleoside and nucleotide derivatives of G to A nucleotides, and in maintaining the intracellular balance of A and G nucleotides. This chain is GMP reductase, found in Streptococcus pneumoniae (strain ATCC 700669 / Spain 23F-1).